We begin with the raw amino-acid sequence, 699 residues long: Kinesin-like protein KIF3A (699 aa).

A Kinesin motor domain is found at 14–345 (NVKVVVRCRP…LRYANRAKNI (332 aa)). 100–107 (GQTGTGKT) provides a ligand contact to ATP. Residues 355–590 (PKDALLRQFQ…LSRELRLQML (236 aa)) adopt a coiled-coil conformation. Disordered regions lie at residues 372–421 (KKLE…KMIE) and 663–699 (SLMKLERPRTSKGKARPKTGRRKRSAKPETVIDSLLQ). Positions 376–400 (EGEEISGSDISGSEEDDDEEGEVGE) are enriched in acidic residues. Positions 672–687 (TSKGKARPKTGRRKRS) are enriched in basic residues. Position 687 is a phosphoserine (serine 687). A globular region spans residues 697–699 (LLQ).

Belongs to the TRAFAC class myosin-kinesin ATPase superfamily. Kinesin family. Kinesin II subfamily. Heterodimer of KIF3A and KIF3B. Interacts with CIMAP3. Interacts with CLN3. Interacts with DCTN1. Interacts with FLCN. Interacts with AP3B1.

Its subcellular location is the cytoplasm. It localises to the cytoskeleton. It is found in the cell projection. The protein resides in the cilium. The protein localises to the microtubule organizing center. Its subcellular location is the centrosome. It localises to the centriole. In terms of biological role, microtubule-based anterograde translocator for membranous organelles. Plus end-directed microtubule sliding activity in vitro. Plays a role in primary cilia formation. Plays a role in centriole cohesion and subdistal appendage organization and function. Regulates the formation of the subdistal appendage via recruitment of DCTN1 to the centriole. Also required for ciliary basal feet formation and microtubule anchoring to mother centriole. The polypeptide is Kinesin-like protein KIF3A (KIF3A) (Homo sapiens (Human)).